The following is a 613-amino-acid chain: Lysophospholipase 1 (613 aa).

Positions 1–21 (MLFRGLSLWMLFLASCLSALA) are cleaved as a signal peptide. The 539-residue stretch at 55-593 (DCPSDNIVES…YNYCWSGLYD (539 aa)) folds into the PLA2c domain. Residues Asn142, Asn173, Asn220, Asn244, Asn281, Asn319, Asn348, Asn365, Asn494, Asn499, Asn523, Asn551, and Asn572 are each glycosylated (N-linked (GlcNAc...) asparagine).

Belongs to the lysophospholipase family.

The protein localises to the secreted. It catalyses the reaction a 1-acyl-sn-glycero-3-phosphocholine + H2O = sn-glycerol 3-phosphocholine + a fatty acid + H(+). Functionally, catalyzes the release of fatty acids from lysophospholipids. Required for survival under high osmolarity, for normal osmotic stress-induced gene expression, and for nutrient-mediated repression of sexual differentiation. The polypeptide is Lysophospholipase 1 (plb1) (Schizosaccharomyces pombe (strain 972 / ATCC 24843) (Fission yeast)).